Here is a 264-residue protein sequence, read N- to C-terminus: Type III pantothenate kinase (264 aa).

Position 6-13 (6-13 (DIGNTQTV)) interacts with ATP. Substrate-binding positions include Tyr-100 and 107–110 (GADR). The active-site Proton acceptor is the Asp-109. Asp-129 is a binding site for K(+). ATP is bound at residue Thr-132. Thr-185 contributes to the substrate binding site.

Belongs to the type III pantothenate kinase family. Homodimer. NH4(+) is required as a cofactor. It depends on K(+) as a cofactor.

It is found in the cytoplasm. The enzyme catalyses (R)-pantothenate + ATP = (R)-4'-phosphopantothenate + ADP + H(+). Its pathway is cofactor biosynthesis; coenzyme A biosynthesis; CoA from (R)-pantothenate: step 1/5. In terms of biological role, catalyzes the phosphorylation of pantothenate (Pan), the first step in CoA biosynthesis. The chain is Type III pantothenate kinase from Rubrobacter xylanophilus (strain DSM 9941 / JCM 11954 / NBRC 16129 / PRD-1).